Here is a 79-residue protein sequence, read N- to C-terminus: Small ribosomal subunit protein uS17 (79 aa).

The protein belongs to the universal ribosomal protein uS17 family. Part of the 30S ribosomal subunit.

In terms of biological role, one of the primary rRNA binding proteins, it binds specifically to the 5'-end of 16S ribosomal RNA. The chain is Small ribosomal subunit protein uS17 from Rhizobium etli (strain ATCC 51251 / DSM 11541 / JCM 21823 / NBRC 15573 / CFN 42).